The sequence spans 194 residues: Oligoribonuclease (194 aa).

In terms of domain architecture, Exonuclease spans 11-174; it reads LIWIDLEMTG…SDVRDSINEL (164 aa). Tyr-132 is an active-site residue.

The protein belongs to the oligoribonuclease family.

It localises to the cytoplasm. 3'-to-5' exoribonuclease specific for small oligoribonucleotides. This Xanthomonas oryzae pv. oryzae (strain MAFF 311018) protein is Oligoribonuclease.